The primary structure comprises 662 residues: Neurexin-2-beta (662 aa).

Over residues 1–10 (MPPGGSGQGG) the composition is skewed to gly residues. The tract at residues 1 to 27 (MPPGGSGQGGCPRRPPALAGPLPPPPP) is disordered. An N-terminal signal peptide occupies residues 1–46 (MPPGGSGQGGCPRRPPALAGPLPPPPPPPPLPLLLGLLLLLGAAEG). Topologically, residues 47-586 (ARVSSSLSTT…EVIRESSSTT (540 aa)) are extracellular. The Laminin G-like domain maps to 87-295 (TTYIFGKGGA…HLRLVGEGPS (209 aa)). Residues D139 and V156 each contribute to the Ca(2+) site. An N-linked (GlcNAc...) asparagine glycan is attached at N186. Ca(2+) contacts are provided by I238 and N240. S350 carries O-linked (Xyl...) (heparan sulfate) serine glycosylation. 3 disordered regions span residues 408–458 (ATQD…LPPT), 476–496 (LLSPRKPAPRPNLRTDGATGA), and 530–557 (LGPGVPTAFEPRRPPPLRPGVTSVPGFP). Residues 587–607 (GMVVGIVAAAALCILILLYAM) traverse the membrane as a helical segment. Over 608–662 (YKYRNRDEGSYQVDQSRNYISNSAQSNGAVVKEKAPAAPKTPSKAKKNKDKEYYV) the chain is Cytoplasmic. Residues 629–662 (NSAQSNGAVVKEKAPAAPKTPSKAKKNKDKEYYV) form a disordered region.

It belongs to the neurexin family. In terms of assembly, interacts (via cytoplasmic C-terminal region) with CASK. Isoform Beta 4b binds alpha-dystroglycan and neuroligins NLGN1, NLGN2 and NLGN3. Interacts with CBLN1, CBLN2 and, less avidly, with CBLN4. Interacts with CLSTN3. Post-translationally, O-glycosylated; contains heparan sulfate. Heparan sulfate attachment is required for synapse development by mediating interactions with neuroligins. As to expression, brain (neuronal synapse).

It is found in the presynaptic cell membrane. Its function is as follows. Neuronal cell surface protein that may be involved in cell recognition and cell adhesion. The sequence is that of Neurexin-2-beta (Nrxn2) from Rattus norvegicus (Rat).